The following is a 196-amino-acid chain: Probable GTP-binding protein EngB (196 aa).

The EngB-type G domain maps to 24-196 (ELSEVALSGR…IWNLIEPYIS (173 aa)). GTP-binding positions include 32–39 (GRSNVGKS), 59–63 (GKTQT), 77–80 (DVPG), 144–147 (TKED), and 176–178 (YSS). Mg(2+) contacts are provided by S39 and T61.

This sequence belongs to the TRAFAC class TrmE-Era-EngA-EngB-Septin-like GTPase superfamily. EngB GTPase family. Mg(2+) serves as cofactor.

In terms of biological role, necessary for normal cell division and for the maintenance of normal septation. In Staphylococcus aureus (strain MRSA252), this protein is Probable GTP-binding protein EngB.